Reading from the N-terminus, the 375-residue chain is uncharacterized protein (375 aa).

The first 20 residues, 1-20 (MKNKLFIILIIFIILKIVIC), serve as a signal peptide directing secretion. Residues 21 to 335 (QNTTPSKLIP…EKQVERKITP (315 aa)) are Extracellular-facing. The segment covering 30–42 (PQQQQKQKQQQTQ) has biased composition (low complexity). Disordered regions lie at residues 30 to 74 (PQQQ…QPQQ) and 113 to 253 (SQNV…PHNH). A compositionally biased stretch (basic residues) spans 43 to 53 (PHHHHHHHQQH). Residues 54–74 (QQHQQQHQPNQQIKQQQQPQQ) show a composition bias toward low complexity. Residues 120–151 (PPHHTQQRVPHHHGPNGAPHHHGPNGAPHHHG) are compositionally biased toward basic residues. Positions 168 to 180 (GHNTQGHVQTNHV) are enriched in polar residues. Positions 181 to 220 (NNINKNNINNNNNNNNNNNNNNNNNNNNNINDNKNIRNNI) are enriched in low complexity. Residues 336-356 (IMVLYILLASTMVIQLFIMVF) form a helical membrane-spanning segment. At 357–375 (KQVKHIREINAKTTMESLL) the chain is on the cytoplasmic side.

The protein resides in the membrane. This is an uncharacterized protein from Dictyostelium discoideum (Social amoeba).